The chain runs to 230 residues: Ribose-5-phosphate isomerase A (230 aa).

Residues 32–35, 85–88, and 98–101 each bind substrate; these read TGST, DGAD, and KGGG. The Proton acceptor role is filled by E107. K125 serves as a coordination point for substrate.

Belongs to the ribose 5-phosphate isomerase family. Homodimer.

It carries out the reaction aldehydo-D-ribose 5-phosphate = D-ribulose 5-phosphate. The protein operates within carbohydrate degradation; pentose phosphate pathway; D-ribose 5-phosphate from D-ribulose 5-phosphate (non-oxidative stage): step 1/1. Its function is as follows. Catalyzes the reversible conversion of ribose-5-phosphate to ribulose 5-phosphate. This chain is Ribose-5-phosphate isomerase A, found in Burkholderia ambifaria (strain ATCC BAA-244 / DSM 16087 / CCUG 44356 / LMG 19182 / AMMD) (Burkholderia cepacia (strain AMMD)).